The following is a 319-amino-acid chain: TATA-box-binding protein (319 aa).

2 disordered regions span residues 1-21 and 107-139; these read MDQN…QGAM and LTTA…SESS. Low complexity-rich tracts occupy residues 107–118 and 126–136; these read LTTAPLPGTTPL and MTPITPATPAS. 2 repeat units span residues 145–221 and 235–312. Residues N147, R183, K198, N237, and R274 each coordinate DNA.

Belongs to the TBP family. As to quaternary structure, binds DNA as monomer. Belongs to the TFIID complex together with the TBP-associated factors (TAFs). Part of a TFIID-containing RNA polymerase II pre-initiation complex that is composed of TBP and at least GTF2A1, GTF2A2, GTF2E1, GTF2E2, GTF2F1, GTF2H2, GTF2H3, GTF2H4, GTF2H5, GTF2B, TCEA1, ERCC2, ERCC3, TAF1, TAF2, TAF3, TAF4, TAF5, TAF6, TAF7, TAF8, TAF9, TAF10, TAF11, TAF12 and TAF13. Component of the transcription factor SL1/TIF-IB complex, composed of TBP and at least TAF1A, TAF1B, TAF1C and TAF1D. Association of TBP to form either TFIID or SL1/TIF-IB appears to be mutually exclusive. Interacts with TAF1A, TAF1B and TAF1C. Interacts with TFIIB, NCOA6, DRAP1, DR1 and ELF3. Interacts with SPIB, SNAPC1, SNAPC2 and SNAPC4. Interacts with UTF1. Interacts with BRF2; this interaction promotes recruitment of BRF2 to TATA box-containing promoters. Interacts with UBTF. Interacts with GPBP1. Interacts with CITED2. Interacts with ATF7IP. Interacts with LLPH. Interacts with GTF2B (via C-terminus); this interaction with promoter-bound TBP guides RNA polymerase II into the pre-initiation complex (PIC). Interacts with PAX5. Interacts with MSX1; the interaction may inhibit MSX1 autoinactivation. Interacts with MSX3.

Its subcellular location is the nucleus. In terms of biological role, general transcription factor that functions at the core of the DNA-binding multiprotein factor TFIID. Binding of TFIID to the TATA box is the initial transcriptional step of the pre-initiation complex (PIC), playing a role in the activation of eukaryotic genes transcribed by RNA polymerase II. Component of a BRF2-containing transcription factor complex that regulates transcription mediated by RNA polymerase III. Component of the transcription factor SL1/TIF-IB complex, which is involved in the assembly of the PIC (pre-initiation complex) during RNA polymerase I-dependent transcription. The rate of PIC formation probably is primarily dependent on the rate of association of SL1 with the rDNA promoter. SL1 is involved in stabilization of nucleolar transcription factor 1/UBTF on rDNA. This chain is TATA-box-binding protein (TBP), found in Bos taurus (Bovine).